A 210-amino-acid chain; its full sequence is Thymidylate kinase (210 aa).

Residue 10–17 (GPEGAGKS) coordinates ATP.

It belongs to the thymidylate kinase family.

It catalyses the reaction dTMP + ATP = dTDP + ADP. Phosphorylation of dTMP to form dTDP in both de novo and salvage pathways of dTTP synthesis. This is Thymidylate kinase from Pseudomonas putida (strain GB-1).